A 284-amino-acid chain; its full sequence is MGYLSKLVTSVVFAIPLASAHLAAYTPGMYCPENSYKGTLTNATDPNLVVFDPLYNLPGDSWFLSKGRNCLLAEPTGVWEIAANTIISVPWANWQNSTGYYADGKEYNERPIPYSVTNPEVIAEGLVSESKGLASPNLHAANKSTAAGTAIAISYESNIWAVTMDTLVVISTAPQTPFERLANYSIPDLAPCKECICVTGWVPDGFGQQNMYMAAHKCKITNPTGGKIPKTPSSVPGPGVKGAKQMIAAFQSEGNNVEWNGGEVVPTYSTRMGYLVGAQTDIFD.

Positions 1 to 20 (MGYLSKLVTSVVFAIPLASA) are cleaved as a signal peptide. N-linked (GlcNAc...) asparagine glycans are attached at residues N42, N96, N142, and N183. C197 and C218 are oxidised to a cystine.

The protein belongs to the polysaccharide monooxygenase AA14 family. It depends on Cu(2+) as a cofactor.

It is found in the secreted. In terms of biological role, lytic polysaccharide monooxygenase (LPMO) that plays decomposes some specific network structures formed between cellulose and hemicellulose in the plant cell walls. Catalysis by LPMOs requires the reduction of the active-site copper from Cu(II) to Cu(I) by a reducing agent and H(2)O(2) or O(2) as a cosubstrate. In Talaromyces rugulosus (Penicillium rugulosum), this protein is AA14 family lytic polysaccharide monooxygenase B.